A 210-amino-acid chain; its full sequence is Riboflavin kinase (210 aa).

The interval 1–81 (MECRERRLAA…DLLRYFNIAS (81 aa)) is H-T-H motif-like. The segment at 82 to 210 (IRLVGRVVSG…GDVVEVEVLL (129 aa)) is riboflavin kinase. A CDP-binding site is contributed by 91-96 (GLGEGA). Thr120 and Asn122 together coordinate Mg(2+). Positions 177 and 185 each coordinate FMN. Position 190-193 (190-193 (VKLR)) interacts with CDP.

The protein belongs to the archaeal riboflavin kinase family. The cofactor is Mg(2+).

The enzyme catalyses riboflavin + CTP = CDP + FMN + H(+). Its pathway is cofactor biosynthesis; FMN biosynthesis; FMN from riboflavin (CTP route): step 1/1. In terms of biological role, catalyzes the CTP-dependent phosphorylation of riboflavin (vitamin B2) to form flavin mononucleotide (FMN). The chain is Riboflavin kinase (ribK) from Pyrobaculum arsenaticum (strain DSM 13514 / JCM 11321 / PZ6).